The following is an 865-amino-acid chain: Aconitate hydratase B (865 aa).

Substrate contacts are provided by residues R191, 244-246 (SSR), 414-416 (QDT), and S498. C710, C769, and C772 together coordinate [4Fe-4S] cluster. Substrate is bound by residues R791 and R796.

It belongs to the aconitase/IPM isomerase family. In terms of assembly, monomer. It depends on [4Fe-4S] cluster as a cofactor.

It carries out the reaction citrate = D-threo-isocitrate. The catalysed reaction is (2S,3R)-3-hydroxybutane-1,2,3-tricarboxylate = 2-methyl-cis-aconitate + H2O. It functions in the pathway carbohydrate metabolism; tricarboxylic acid cycle; isocitrate from oxaloacetate: step 2/2. The protein operates within organic acid metabolism; propanoate degradation. Involved in the catabolism of short chain fatty acids (SCFA) via the tricarboxylic acid (TCA)(acetyl degradation route) and the 2-methylcitrate cycle I (propionate degradation route). Catalyzes the reversible isomerization of citrate to isocitrate via cis-aconitate. Also catalyzes the hydration of 2-methyl-cis-aconitate to yield (2R,3S)-2-methylisocitrate. The apo form of AcnB functions as a RNA-binding regulatory protein which regulates FliC synthesis via interaction with the ftsH transcript to decrease the intracellular levels of FtsH. The lower levels of FtsH protease activity then influence sigma-32, DnaK and ultimately FliC production. The chain is Aconitate hydratase B (acnB) from Salmonella typhimurium (strain LT2 / SGSC1412 / ATCC 700720).